The primary structure comprises 590 residues: Aspartate--tRNA(Asp/Asn) ligase (590 aa).

L-aspartate is bound at residue E175. The segment at 199-202 (QQYK) is aspartate. R221 and H450 together coordinate L-aspartate. ATP is bound at residue 221-223 (RDE). E484 contacts ATP. An L-aspartate-binding site is contributed by R491. 536-539 (GVDR) is a binding site for ATP.

The protein belongs to the class-II aminoacyl-tRNA synthetase family. Type 1 subfamily. In terms of assembly, homodimer.

The protein resides in the cytoplasm. It carries out the reaction tRNA(Asx) + L-aspartate + ATP = L-aspartyl-tRNA(Asx) + AMP + diphosphate. Aspartyl-tRNA synthetase with relaxed tRNA specificity since it is able to aspartylate not only its cognate tRNA(Asp) but also tRNA(Asn). Reaction proceeds in two steps: L-aspartate is first activated by ATP to form Asp-AMP and then transferred to the acceptor end of tRNA(Asp/Asn). This is Aspartate--tRNA(Asp/Asn) ligase from Bradyrhizobium sp. (strain ORS 278).